Here is a 197-residue protein sequence, read N- to C-terminus: Scoloptoxin SSD20 (197 aa).

A signal peptide spans 1–6 (PPMTTE).

Expressed by the venom gland.

The protein resides in the secreted. Functionally, may act as a voltage-gated potassium channel inhibitor. Is highly similar to the subunit beta of SSD14 which, when complexed with subunit alpha, induces platelet aggregation and hemolysis. This Scolopendra dehaani (Thai centipede) protein is Scoloptoxin SSD20.